The chain runs to 474 residues: Viral protein TPX (474 aa).

The disordered stretch occupies residues 268–474 (VTVTPISSPS…TPTSTTSSNI (207 aa)). The span at 275–365 (SPSPTPTPTP…PTPTPTPTPT (91 aa)) shows a compositional bias: pro residues. A Thr-Pro(N) repeat occupies 278–367 (PTPTPTPTPT…PTPTPTPTPT (90 aa)). Residues 278–467 (PTPTPTPTPT…PTPTPTPTPT (190 aa)) are 3 Thr-Pro repeats regions and two near identical repeats. Residues 368 to 377 (YDITYVVFDV) constitute a repeat. Residues 378–436 (TPSPTPTPTPTPTPTPTPTPTPTPTPTPTPTPTPTPTPTPTPTPTPTPTPTPTPTPTPT) form a Thr-Pro(N) repeat. Positions 380–434 (SPTPTPTPTPTPTPTPTPTPTPTPTPTPTPTPTPTPTPTPTPTPTPTPTPTPTPT) are enriched in pro residues. A repeat spans 437 to 446 (YDITYVIFDV). One copy of the Thr-Pro(N) repeat lies at 447 to 467 (TPSPTPTPTPTPTPTPTPTPT). Positions 449–465 (SPTPTPTPTPTPTPTPT) are enriched in pro residues.

The protein is Viral protein TPX of Thermoproteus tenax virus 1 (strain VT3) (TTV1).